Reading from the N-terminus, the 332-residue chain is Ribosomal RNA small subunit methyltransferase H (332 aa).

S-adenosyl-L-methionine-binding positions include 37–39 (GGY), Asp55, Phe82, Asp103, and Gln110. The interval 281–332 (TKRPVTPSDEETAANPRARSAKLRAGERTAAPAQPEAPLPHWPTLASVMGRR) is disordered.

It belongs to the methyltransferase superfamily. RsmH family.

It is found in the cytoplasm. The enzyme catalyses cytidine(1402) in 16S rRNA + S-adenosyl-L-methionine = N(4)-methylcytidine(1402) in 16S rRNA + S-adenosyl-L-homocysteine + H(+). Functionally, specifically methylates the N4 position of cytidine in position 1402 (C1402) of 16S rRNA. The protein is Ribosomal RNA small subunit methyltransferase H of Rhodopseudomonas palustris (strain BisA53).